The sequence spans 381 residues: uncharacterized protein (381 aa).

Residues 176 to 292 form a disordered region; it reads HAAGKIKKSK…EPMVDETPQN (117 aa). Residues 177–186 are compositionally biased toward basic residues; that stretch reads AAGKIKKSKN. Positions 187-212 are enriched in basic and acidic residues; that stretch reads QKKDGTLSRPLGKKENKSVVKVKIEE. The segment covering 276 to 286 has biased composition (acidic residues); it reads DEEDEDEEPMV.

This is an uncharacterized protein from Caenorhabditis elegans.